Consider the following 149-residue polypeptide: FAD synthase (149 aa).

ATP contacts are provided by residues 15–16 (VF), 20–23 (HVGH), and Asp-101.

This sequence belongs to the archaeal FAD synthase family. As to quaternary structure, homodimer. The cofactor is a divalent metal cation.

It carries out the reaction FMN + ATP + H(+) = FAD + diphosphate. It functions in the pathway cofactor biosynthesis; FAD biosynthesis; FAD from FMN: step 1/1. Catalyzes the transfer of the AMP portion of ATP to flavin mononucleotide (FMN) to produce flavin adenine dinucleotide (FAD) coenzyme. The chain is FAD synthase from Thermococcus kodakarensis (strain ATCC BAA-918 / JCM 12380 / KOD1) (Pyrococcus kodakaraensis (strain KOD1)).